The chain runs to 529 residues: Bifunctional purine biosynthesis protein PurH (529 aa).

The MGS-like domain maps to 1–148 (MQQRRPVRRA…KNHKDVAIVV (148 aa)).

This sequence belongs to the PurH family.

It catalyses the reaction (6R)-10-formyltetrahydrofolate + 5-amino-1-(5-phospho-beta-D-ribosyl)imidazole-4-carboxamide = 5-formamido-1-(5-phospho-D-ribosyl)imidazole-4-carboxamide + (6S)-5,6,7,8-tetrahydrofolate. It carries out the reaction IMP + H2O = 5-formamido-1-(5-phospho-D-ribosyl)imidazole-4-carboxamide. Its pathway is purine metabolism; IMP biosynthesis via de novo pathway; 5-formamido-1-(5-phospho-D-ribosyl)imidazole-4-carboxamide from 5-amino-1-(5-phospho-D-ribosyl)imidazole-4-carboxamide (10-formyl THF route): step 1/1. It participates in purine metabolism; IMP biosynthesis via de novo pathway; IMP from 5-formamido-1-(5-phospho-D-ribosyl)imidazole-4-carboxamide: step 1/1. This is Bifunctional purine biosynthesis protein PurH from Salmonella agona (strain SL483).